A 259-amino-acid polypeptide reads, in one-letter code: Dihydroorotate dehydrogenase B (NAD(+)), electron transfer subunit (259 aa).

The region spanning 2–102 is the FAD-binding FR-type domain; sequence MQKQNMIVVN…LGPLGHGFPV (101 aa). Residues 53-56, 70-72, and 77-78 contribute to the FAD site; these read RPIS, LYR, and GT. [2Fe-2S] cluster is bound by residues Cys-221, Cys-226, Cys-229, and Cys-246.

It belongs to the PyrK family. In terms of assembly, heterotetramer of 2 PyrK and 2 PyrD type B subunits. It depends on [2Fe-2S] cluster as a cofactor. FAD is required as a cofactor.

Its pathway is pyrimidine metabolism; UMP biosynthesis via de novo pathway; orotate from (S)-dihydroorotate (NAD(+) route): step 1/1. Responsible for channeling the electrons from the oxidation of dihydroorotate from the FMN redox center in the PyrD type B subunit to the ultimate electron acceptor NAD(+). The chain is Dihydroorotate dehydrogenase B (NAD(+)), electron transfer subunit from Bacillus mycoides (strain KBAB4) (Bacillus weihenstephanensis).